Reading from the N-terminus, the 408-residue chain is uncharacterized protein (408 aa).

8 4Fe-4S ferredoxin-type domains span residues 42 to 72 (IPPI…MIYN), 78 to 107 (KLPV…MDKH), 122 to 151 (SNLI…RKEG), 151 to 181 (GKYV…VVDE), 212 to 241 (KIPH…NEKK), 233 to 265 (GEID…IYKP), 273 to 302 (ICYV…ISKE), and 304 to 333 (KLPY…VVKP). [4Fe-4S] cluster is bound by residues cysteine 52, cysteine 55, cysteine 58, cysteine 62, cysteine 87, cysteine 90, cysteine 93, cysteine 97, cysteine 131, cysteine 134, cysteine 137, cysteine 141, cysteine 160, cysteine 163, cysteine 166, and cysteine 170. [4Fe-4S] cluster contacts are provided by cysteine 282, cysteine 285, cysteine 288, and cysteine 292.

This is an uncharacterized protein from Methanocaldococcus jannaschii (strain ATCC 43067 / DSM 2661 / JAL-1 / JCM 10045 / NBRC 100440) (Methanococcus jannaschii).